We begin with the raw amino-acid sequence, 406 residues long: Argininosuccinate synthase (406 aa).

Residues 11–19 (AYSGGLDTS) and alanine 38 contribute to the ATP site. The L-citrulline site is built by tyrosine 91 and serine 96. Glycine 121 contacts ATP. The L-aspartate site is built by threonine 123, asparagine 127, and aspartate 128. Asparagine 127 contributes to the L-citrulline binding site. L-citrulline-binding residues include arginine 131, serine 181, serine 190, glutamate 266, and tyrosine 278.

This sequence belongs to the argininosuccinate synthase family. Type 1 subfamily. As to quaternary structure, homotetramer.

It is found in the cytoplasm. The catalysed reaction is L-citrulline + L-aspartate + ATP = 2-(N(omega)-L-arginino)succinate + AMP + diphosphate + H(+). Its pathway is amino-acid biosynthesis; L-arginine biosynthesis; L-arginine from L-ornithine and carbamoyl phosphate: step 2/3. This is Argininosuccinate synthase from Campylobacter jejuni subsp. doylei (strain ATCC BAA-1458 / RM4099 / 269.97).